The chain runs to 147 residues: Large ribosomal subunit protein bL9 (147 aa).

The protein belongs to the bacterial ribosomal protein bL9 family.

Its function is as follows. Binds to the 23S rRNA. This Cytophaga hutchinsonii (strain ATCC 33406 / DSM 1761 / CIP 103989 / NBRC 15051 / NCIMB 9469 / D465) protein is Large ribosomal subunit protein bL9.